We begin with the raw amino-acid sequence, 104 residues long: Urease subunit beta (104 aa).

Belongs to the urease beta subunit family. As to quaternary structure, heterotrimer of UreA (gamma), UreB (beta) and UreC (alpha) subunits. Three heterotrimers associate to form the active enzyme.

The protein resides in the cytoplasm. The catalysed reaction is urea + 2 H2O + H(+) = hydrogencarbonate + 2 NH4(+). It participates in nitrogen metabolism; urea degradation; CO(2) and NH(3) from urea (urease route): step 1/1. This Methylocella silvestris (strain DSM 15510 / CIP 108128 / LMG 27833 / NCIMB 13906 / BL2) protein is Urease subunit beta.